We begin with the raw amino-acid sequence, 154 residues long: MAANKERTFIAIKPDGVQRGLMGDIIKRFEQKGFRLVAMKFQQASQDLLRQHYIDLKDRPFYPGLVEYMSSGPVLAMVWEGLNVVKTGRVMLGETNPADSKPGTIRGDFCIQVGRNIIHGSDSVESANKEIALWFKDEELVENKSCAYEWVYEN.

Residues Lys-13, Phe-61, Arg-89, Thr-95, Arg-106, and Asn-116 each contribute to the ATP site. His-119 functions as the Pros-phosphohistidine intermediate in the catalytic mechanism.

Belongs to the NDK family. Mg(2+) serves as cofactor.

The protein resides in the cytoplasm. The enzyme catalyses a 2'-deoxyribonucleoside 5'-diphosphate + ATP = a 2'-deoxyribonucleoside 5'-triphosphate + ADP. It carries out the reaction a ribonucleoside 5'-diphosphate + ATP = a ribonucleoside 5'-triphosphate + ADP. Functionally, major role in the synthesis of nucleoside triphosphates other than ATP. The ATP gamma phosphate is transferred to the NDP beta phosphate via a ping-pong mechanism, using a phosphorylated active-site intermediate. The sequence is that of Nucleoside diphosphate kinase A1 from Xenopus laevis (African clawed frog).